Reading from the N-terminus, the 74-residue chain is UPF0346 protein RBAM_019500 (74 aa).

It belongs to the UPF0346 family.

This Bacillus velezensis (strain DSM 23117 / BGSC 10A6 / LMG 26770 / FZB42) (Bacillus amyloliquefaciens subsp. plantarum) protein is UPF0346 protein RBAM_019500.